We begin with the raw amino-acid sequence, 372 residues long: tRNA-specific 2-thiouridylase MnmA (372 aa).

ATP-binding positions include 13–20 (GMSGGVDS) and Met39. The interval 99-101 (NPD) is interaction with target base in tRNA. Residue Cys104 is the Nucleophile of the active site. A disulfide bridge connects residues Cys104 and Cys200. An ATP-binding site is contributed by Gly128. Positions 150–152 (KDQ) are interaction with tRNA. The active-site Cysteine persulfide intermediate is Cys200. The interval 310–311 (RY) is interaction with tRNA.

It belongs to the MnmA/TRMU family.

It is found in the cytoplasm. It catalyses the reaction S-sulfanyl-L-cysteinyl-[protein] + uridine(34) in tRNA + AH2 + ATP = 2-thiouridine(34) in tRNA + L-cysteinyl-[protein] + A + AMP + diphosphate + H(+). In terms of biological role, catalyzes the 2-thiolation of uridine at the wobble position (U34) of tRNA, leading to the formation of s(2)U34. The protein is tRNA-specific 2-thiouridylase MnmA of Bacillus pumilus (strain SAFR-032).